A 249-amino-acid chain; its full sequence is Tryptophan synthase alpha chain (249 aa).

Catalysis depends on proton acceptor residues Glu43 and Asp54.

The protein belongs to the TrpA family. As to quaternary structure, tetramer of two alpha and two beta chains.

The enzyme catalyses (1S,2R)-1-C-(indol-3-yl)glycerol 3-phosphate + L-serine = D-glyceraldehyde 3-phosphate + L-tryptophan + H2O. It functions in the pathway amino-acid biosynthesis; L-tryptophan biosynthesis; L-tryptophan from chorismate: step 5/5. In terms of biological role, the alpha subunit is responsible for the aldol cleavage of indoleglycerol phosphate to indole and glyceraldehyde 3-phosphate. This chain is Tryptophan synthase alpha chain, found in Campylobacter jejuni subsp. doylei (strain ATCC BAA-1458 / RM4099 / 269.97).